A 265-amino-acid chain; its full sequence is uncharacterized protein (265 aa).

Residues H7, H9, E95, H131, H156, and D206 each contribute to the a divalent metal cation site.

This sequence belongs to the metallo-dependent hydrolases superfamily. TatD-type hydrolase family. A divalent metal cation is required as a cofactor.

This is an uncharacterized protein from Buchnera aphidicola subsp. Baizongia pistaciae (strain Bp).